The chain runs to 182 residues: Vacuolar protein sorting-associated protein 29 (182 aa).

Position 50 is an N6-acetyllysine (Lys-50).

The protein belongs to the VPS29 family. In terms of assembly, component of the commander complex consisting of the CCC subcomplex and the retriever subcomplex. Component of the heterotrimeric retriever complex formed by VPS26C, VPS29 and VPS35L; within the complex interacts with VPS35L. Component of the heterotrimeric retromer cargo-selective complex (CSC), also described as vacuolar protein sorting subcomplex (VPS) formed by VPS26 (VPS26A or VPS26B), VPS29 and VPS35. The CSC has a highly elongated structure with VPS26 and VPS29 binding independently at opposite distal ends of VPS35 as central platform. The CSC is believed to associate with variable sorting nexins to form functionally distinct retromer complex variants. The originally described retromer complex (also called SNX-BAR retromer) is a pentamer containing the CSC and a heterodimeric membrane-deforming subcomplex formed between SNX1 or SNX2 and SNX5 or SNX6 (also called SNX-BAR subcomplex); the respective CSC and SNX-BAR subcomplexes associate with low affinity. The CSC associates with SNX3 to form a SNX3-retromer complex. The CSC associates with SNX27, the WASH complex and the SNX-BAR subcomplex to form the SNX27-retromer complex. Interacts with VPS26A, VPS35, SNX1, SNX2, SNX3, SNX27, WASHC5. Interacts with TBC1D5; this interaction is blocked by VPS35L in the retriever complex. Interacts with SNX17; the interaction is indirect; SNX17 (via its C-terminus) interacts with the retriever complex (via VPS26C and VPS35L). Interacts with VPS26B and ANKRD27.

The protein resides in the cytoplasm. It is found in the membrane. The protein localises to the endosome membrane. Its function is as follows. Component of the commander complex that is essential for endosomal recycling of transmembrane cargos; the commander complex is composed of the CCC subcomplex and the retriever subcomplex. Component of the retriever complex, which is a heterotrimeric complex related to retromer cargo-selective complex (CSC) and essential for retromer-independent retrieval and recycling of numerous cargos such as integrin alpha-5/beta-1 (ITGA5:ITGB1). Component of the retromer cargo-selective complex (CSC). The CSC is believed to be the core functional component of retromer or respective retromer complex variants acting to prevent missorting of selected transmembrane cargo proteins into the lysosomal degradation pathway. The recruitment of the CSC to the endosomal membrane involves RAB7A and SNX3. The SNX-BAR retromer mediates retrograde transport of cargo proteins from endosomes to the trans-Golgi network (TGN) and is involved in endosome-to-plasma membrane transport for cargo protein recycling. The SNX3-retromer mediates the retrograde endosome-to-TGN transport of WLS distinct from the SNX-BAR retromer pathway. The SNX27-retromer is believed to be involved in endosome-to-plasma membrane trafficking and recycling of a broad spectrum of cargo proteins. The CSC seems to act as recruitment hub for other proteins, such as the WASH complex and TBC1D5. Required to regulate transcytosis of the polymeric immunoglobulin receptor (pIgR-pIgA). In the endosomes, retriever complex drives the retrieval and recycling of NxxY-motif-containing cargo proteins by coupling to SNX17, a cargo essential for the homeostatic maintenance of numerous cell surface proteins associated with processes that include cell migration, cell adhesion, nutrient supply and cell signaling. The recruitment of the retriever complex to the endosomal membrane involves CCC and WASH complexes. Involved in GLUT1 endosome-to-plasma membrane trafficking; the function is dependent of association with ANKRD27. The chain is Vacuolar protein sorting-associated protein 29 (Vps29) from Mus musculus (Mouse).